A 79-amino-acid chain; its full sequence is Ponericin-W-like 32.1 (79 aa).

A signal peptide spans 1–23 (MKCKKQLLVIFFAYFLVVNESEA). The propeptide occupies 49–79 (RALMKRDLEDIMDPYQKNLKLDRYLRRLAMD).

It belongs to the non-disulfide-bridged peptide (NDBP) superfamily. Medium-length antimicrobial peptide (group 3) family. Ponericin-W subfamily. Expressed by the venom gland.

Its subcellular location is the secreted. It is found in the target cell membrane. Antimicrobial peptide with potent activity against a range of Gram-positive and Gram-negative bacteria. Has high hemolytic activity against erythrocytes. May act by disrupting the integrity of the bacterial cell membrane. This chain is Ponericin-W-like 32.1, found in Lychas mucronatus (Chinese swimming scorpion).